A 447-amino-acid chain; its full sequence is Maltoporin (447 aa).

Positions 1 to 26 (MELRMKKVSVIAAAVAATLAAGSAFA) are cleaved as a signal peptide.

The protein belongs to the porin LamB (TC 1.B.3) family. In terms of assembly, homotrimer formed of three 18-stranded antiparallel beta-barrels, containing three independent channels.

It localises to the cell outer membrane. It carries out the reaction beta-maltose(in) = beta-maltose(out). Its function is as follows. Involved in the transport of maltose and maltodextrins. The sequence is that of Maltoporin from Vibrio campbellii (strain ATCC BAA-1116).